The chain runs to 247 residues: RNA-free ribonuclease P (247 aa).

The disordered stretch occupies residues 223–247; it reads SPEGEKEKGEADKKKKSHSEEAEFI.

It belongs to the HARP family.

The catalysed reaction is Endonucleolytic cleavage of RNA, removing 5'-extranucleotides from tRNA precursor.. Its function is as follows. RNA-free RNase P that catalyzes the removal of the 5'-leader sequence from pre-tRNA to produce the mature 5'-terminus. The sequence is that of RNA-free ribonuclease P from Methanosarcina acetivorans (strain ATCC 35395 / DSM 2834 / JCM 12185 / C2A).